Reading from the N-terminus, the 474-residue chain is Glutathione synthetase (474 aa).

Ala2 carries the N-acetylalanine modification. Residue Arg125 participates in substrate binding. ATP is bound at residue Glu144. Residues Glu144 and Asn146 each contribute to the Mg(2+) site. Residues 148–151 (ISAS), 214–216 (ERN), Gln220, and 267–270 (RDGY) each bind substrate. ATP is bound by residues Lys305, 364 to 373 (KPQREGGGNN), Tyr375, and 398 to 401 (MEKI). Glu368 contributes to the Mg(2+) binding site. At Ser415 the chain carries Phosphoserine. Residue Glu425 participates in ATP binding. Arg450 contributes to the substrate binding site. ATP-binding residues include Lys452 and Asp458. 461-462 (VA) serves as a coordination point for substrate.

Belongs to the eukaryotic GSH synthase family. As to quaternary structure, homodimer. Mg(2+) serves as cofactor.

The catalysed reaction is gamma-L-glutamyl-L-cysteine + glycine + ATP = glutathione + ADP + phosphate + H(+). It carries out the reaction gamma-L-glutamyl-(2S)-2-aminobutanoate + glycine + ATP = ophthalmate + ADP + phosphate + H(+). Its pathway is sulfur metabolism; glutathione biosynthesis; glutathione from L-cysteine and L-glutamate: step 2/2. Its function is as follows. Catalyzes the production of glutathione from gamma-glutamylcysteine and glycine in an ATP-dependent manner. Glutathione (gamma-glutamylcysteinylglycine, GSH) is the most abundant intracellular thiol in living aerobic cells and is required for numerous processes including the protection of cells against oxidative damage, amino acid transport, the detoxification of foreign compounds, the maintenance of protein sulfhydryl groups in a reduced state and acts as a cofactor for a number of enzymes. Participates in ophthalmate biosynthesis in hepatocytes. In Homo sapiens (Human), this protein is Glutathione synthetase.